Reading from the N-terminus, the 250-residue chain is Glucosamine-6-phosphate deaminase (250 aa).

Aspartate 67 serves as the catalytic Proton acceptor; for enolization step. Asparagine 136 (for ring-opening step) is an active-site residue. Residue histidine 138 is the Proton acceptor; for ring-opening step of the active site. The For ring-opening step role is filled by glutamate 143.

The protein belongs to the glucosamine/galactosamine-6-phosphate isomerase family. NagB subfamily.

It catalyses the reaction alpha-D-glucosamine 6-phosphate + H2O = beta-D-fructose 6-phosphate + NH4(+). It functions in the pathway amino-sugar metabolism; N-acetylneuraminate degradation; D-fructose 6-phosphate from N-acetylneuraminate: step 5/5. Catalyzes the reversible isomerization-deamination of glucosamine 6-phosphate (GlcN6P) to form fructose 6-phosphate (Fru6P) and ammonium ion. This is Glucosamine-6-phosphate deaminase from Oceanobacillus iheyensis (strain DSM 14371 / CIP 107618 / JCM 11309 / KCTC 3954 / HTE831).